Reading from the N-terminus, the 523-residue chain is uncharacterized protein (523 aa).

The segment covering M1 to H14 has biased composition (polar residues). 3 disordered regions span residues M1–A36, H51–S187, and Q200–K224. The segment covering D87–I97 has biased composition (basic and acidic residues). Acidic residues-rich tracts occupy residues D117–Y130 and Q138–N182. Residues Q200–P210 are compositionally biased toward basic and acidic residues.

The protein belongs to the AATF family.

This is an uncharacterized protein from Dictyostelium discoideum (Social amoeba).